Here is a 348-residue protein sequence, read N- to C-terminus: Interferon regulatory factor 2 (348 aa).

A DNA-binding region (IRF tryptophan pentad repeat) is located at residues 5 to 113; sequence RMRMRPWLEE…NAFRVYRMLP (109 aa). N6-acetyllysine is present on residues Lys-75 and Lys-78. Residues 117–137 form a disordered region; the sequence is RPSKKGKKTKSEKDDKFKQIK. Over residues 125–137 the composition is skewed to basic and acidic residues; it reads TKSEKDDKFKQIK. Glycyl lysine isopeptide (Lys-Gly) (interchain with G-Cter in SUMO) cross-links involve residues Lys-137, Lys-164, and Lys-291. Residues 311–348 are disordered; sequence LPQVVSTASTSSSRPDRETRASVIKKTSDITQSRVKSC. Composition is skewed to polar residues over residues 314 to 323 and 339 to 348; these read VVSTASTSSS and DITQSRVKSC.

The protein belongs to the IRF family. In terms of assembly, interacts with CREBBP in growing cells; the interaction acetylates IRF2 and regulates IRF2-dependent H4 promoter activity.

It localises to the nucleus. In terms of biological role, specifically binds to the upstream regulatory region of type I IFN and IFN-inducible MHC class I genes (the interferon consensus sequence (ICS)) and represses those genes. Also acts as an activator for several genes including H4 and IL7. Constitutively binds to the ISRE promoter to activate IL7. Involved in cell cycle regulation through binding the site II (HiNF-M) promoter region of H4 and activating transcription during cell growth. Antagonizes IRF1 transcriptional activation. The sequence is that of Interferon regulatory factor 2 (IRF2) from Gallus gallus (Chicken).